Consider the following 400-residue polypeptide: Mu-type opioid receptor (400 aa).

Residues 1–68 (MDSSAVPANA…CPPTGSPSMI (68 aa)) lie on the Extracellular side of the membrane. Residues Asn9, Asn12, Asn33, Asn40, and Asn48 are each glycosylated (N-linked (GlcNAc...) asparagine). The chain crosses the membrane as a helical span at residues 69–93 (TAITIMALYSIVCVVGLFGNFLVMY). The Cytoplasmic segment spans residues 94-106 (VIVRYTKMKTATN). A helical membrane pass occupies residues 107–131 (IYIFNLALADALATSTLPFQSVNYL). Residues 132 to 142 (MGTWPFGTILC) are Extracellular-facing. Cys142 and Cys219 are joined by a disulfide. A helical membrane pass occupies residues 143 to 165 (KIVISIDYYNMFTSIFTLCTMSV). Topologically, residues 166–185 (DRYIAVCHPVKALDFRTPRN) are cytoplasmic. Tyr168 carries the phosphotyrosine modification. Residues 186–207 (AKIVNVCNWIISSAIGLPVMFM) traverse the membrane as a helical segment. At 208–230 (ATTKYRQGSIDCTLTFSHPTWYW) the chain is on the extracellular side. Residues 231–255 (ENLLKICVFIFAFIMPVLIITVCYG) traverse the membrane as a helical segment. The Cytoplasmic portion of the chain corresponds to 256 to 279 (LMILRLKSVRMLSGSKEKDRNLRR). A helical transmembrane segment spans residues 280-306 (ITRMVLVVVAVFIVCWTPIHIYVIIKA). The Extracellular segment spans residues 307 to 314 (LVTIPETT). A helical membrane pass occupies residues 315-338 (FQTVSWHFCIALGYTNSCLNPVLY). The NPxxY; plays a role in stabilizing the activated conformation of the receptor signature appears at 334-338 (NPVLY). Residues 339 to 400 (AFLDENFKRC…NLEAETAPLP (62 aa)) are Cytoplasmic-facing. Cys353 carries the S-palmitoyl cysteine lipid modification. Ser365 carries the phosphoserine modification. At Thr372 the chain carries Phosphothreonine. Ser377 bears the Phosphoserine mark. Position 396 is a phosphothreonine (Thr396).

It belongs to the G-protein coupled receptor 1 family. As to quaternary structure, forms homooligomers and heterooligomers with other GPCRs, such as OPRD1, OPRK1, OPRL1, NPFFR2, ADRA2A, SSTR2, CNR1 and CCR5 (probably in dimeric forms). Interacts with heterotrimeric G proteins; interaction with a heterotrimeric complex containing GNAI1, GNB1 and GNG2 stabilizes the active conformation of the receptor and increases its affinity for endomorphin-2, the synthetic opioid peptide DAMGO and for morphinan agonists. Interacts with PPL; the interaction disrupts agonist-mediated G-protein activation. Interacts (via C-terminus) with DNAJB4 (via C-terminus). Interacts with calmodulin; the interaction inhibits the constitutive activity of OPRM1; it abolishes basal and attenuates agonist-stimulated G-protein coupling. Interacts with FLNA, PLD2, RANBP9 and WLS and GPM6A. Interacts with RTP4. Interacts with SYP and GNAS. Interacts with RGS9, RGS17, RGS20, RGS4, PPP1R9B and HINT1. In terms of processing, phosphorylated. Differentially phosphorylated in basal and agonist-induced conditions. Agonist-mediated phosphorylation modulates receptor internalization. Phosphorylated by GRK2 in a agonist-dependent manner. Phosphorylation at Tyr-168 requires receptor activation, is dependent on non-receptor protein tyrosine kinase Src and results in a decrease in agonist efficacy by reducing G-protein coupling efficiency. Phosphorylated on tyrosine residues; the phosphorylation is involved in agonist-induced G-protein-independent receptor down-regulation. Phosphorylation at Ser-377 is involved in G-protein-dependent but not beta-arrestin-dependent activation of the ERK pathway. Post-translationally, ubiquitinated. A basal ubiquitination seems not to be related to degradation. Ubiquitination is increased upon formation of OPRM1:OPRD1 oligomers leading to proteasomal degradation; the ubiquitination is diminished by RTP4.

The protein resides in the cell membrane. It is found in the cell projection. The protein localises to the axon. Its subcellular location is the perikaryon. It localises to the dendrite. The protein resides in the endosome. Functionally, receptor for endogenous opioids such as beta-endorphin and endomorphin. Receptor for natural and synthetic opioids including morphine, heroin, DAMGO, fentanyl, etorphine, buprenorphin and methadone. Also activated by enkephalin peptides, such as Met-enkephalin or Met-enkephalin-Arg-Phe, with higher affinity for Met-enkephalin-Arg-Phe. Agonist binding to the receptor induces coupling to an inactive GDP-bound heterotrimeric G-protein complex and subsequent exchange of GDP for GTP in the G-protein alpha subunit leading to dissociation of the G-protein complex with the free GTP-bound G-protein alpha and the G-protein beta-gamma dimer activating downstream cellular effectors. The agonist- and cell type-specific activity is predominantly coupled to pertussis toxin-sensitive G(i) and G(o) G alpha proteins, GNAI1, GNAI2, GNAI3 and GNAO1, and to a lesser extent to pertussis toxin-insensitive G alpha proteins GNAZ and GNA15. They mediate an array of downstream cellular responses, including inhibition of adenylate cyclase activity and both N-type and L-type calcium channels, activation of inward rectifying potassium channels, mitogen-activated protein kinase (MAPK), phospholipase C (PLC), phosphoinositide/protein kinase (PKC), phosphoinositide 3-kinase (PI3K) and regulation of NF-kappa-B. Also couples to adenylate cyclase stimulatory G alpha proteins. The selective temporal coupling to G-proteins and subsequent signaling can be regulated by RGSZ proteins, such as RGS9, RGS17 and RGS4. Phosphorylation by members of the GPRK subfamily of Ser/Thr protein kinases and association with beta-arrestins is involved in short-term receptor desensitization. Beta-arrestins associate with the GPRK-phosphorylated receptor and uncouple it from the G-protein thus terminating signal transduction. The phosphorylated receptor is internalized through endocytosis via clathrin-coated pits which involves beta-arrestins. The activation of the ERK pathway occurs either in a G-protein-dependent or a beta-arrestin-dependent manner and is regulated by agonist-specific receptor phosphorylation. Acts as a class A G-protein coupled receptor (GPCR) which dissociates from beta-arrestin at or near the plasma membrane and undergoes rapid recycling. Receptor down-regulation pathways are varying with the agonist and occur dependent or independent of G-protein coupling. Endogenous ligands induce rapid desensitization, endocytosis and recycling. Heterooligomerization with other GPCRs can modulate agonist binding, signaling and trafficking properties. Involved in neurogenesis. The sequence is that of Mu-type opioid receptor (OPRM1) from Saimiri boliviensis boliviensis (Bolivian squirrel monkey).